Consider the following 334-residue polypeptide: Nucleoid-associated protein YejK (334 aa).

Belongs to the YejK family.

The protein localises to the cytoplasm. It localises to the nucleoid. This chain is Nucleoid-associated protein YejK, found in Escherichia fergusonii (strain ATCC 35469 / DSM 13698 / CCUG 18766 / IAM 14443 / JCM 21226 / LMG 7866 / NBRC 102419 / NCTC 12128 / CDC 0568-73).